We begin with the raw amino-acid sequence, 275 residues long: Formamidopyrimidine-DNA glycosylase (275 aa).

Pro2 (schiff-base intermediate with DNA) is an active-site residue. Glu3 functions as the Proton donor in the catalytic mechanism. The active-site Proton donor; for beta-elimination activity is the Lys59. Positions 94 and 113 each coordinate DNA. The segment at 241–275 adopts an FPG-type zinc-finger fold; the sequence is LVHTHAKEPCQICGTIIQKTKVNGRGTYYCPNCQN. Catalysis depends on Arg265, which acts as the Proton donor; for delta-elimination activity.

It belongs to the FPG family. In terms of assembly, monomer. The cofactor is Zn(2+).

It carries out the reaction Hydrolysis of DNA containing ring-opened 7-methylguanine residues, releasing 2,6-diamino-4-hydroxy-5-(N-methyl)formamidopyrimidine.. The catalysed reaction is 2'-deoxyribonucleotide-(2'-deoxyribose 5'-phosphate)-2'-deoxyribonucleotide-DNA = a 3'-end 2'-deoxyribonucleotide-(2,3-dehydro-2,3-deoxyribose 5'-phosphate)-DNA + a 5'-end 5'-phospho-2'-deoxyribonucleoside-DNA + H(+). Its function is as follows. Involved in base excision repair of DNA damaged by oxidation or by mutagenic agents. Acts as a DNA glycosylase that recognizes and removes damaged bases. Has a preference for oxidized purines, such as 7,8-dihydro-8-oxoguanine (8-oxoG). Has AP (apurinic/apyrimidinic) lyase activity and introduces nicks in the DNA strand. Cleaves the DNA backbone by beta-delta elimination to generate a single-strand break at the site of the removed base with both 3'- and 5'-phosphates. The protein is Formamidopyrimidine-DNA glycosylase of Ureaplasma parvum serovar 3 (strain ATCC 700970).